The following is a 361-amino-acid chain: Peptide chain release factor 1 (361 aa).

An N5-methylglutamine modification is found at Q237. The segment at 283–307 is disordered; that stretch reads AQQQEQQEQQSSTRKELIGSGDRSQ.

The protein belongs to the prokaryotic/mitochondrial release factor family. In terms of processing, methylated by PrmC. Methylation increases the termination efficiency of RF1.

The protein resides in the cytoplasm. Functionally, peptide chain release factor 1 directs the termination of translation in response to the peptide chain termination codons UAG and UAA. The sequence is that of Peptide chain release factor 1 from Vesicomyosocius okutanii subsp. Calyptogena okutanii (strain HA).